The chain runs to 224 residues: Cytidylate kinase (224 aa).

Residue 10–18 (GPSGVGKGT) participates in ATP binding.

Belongs to the cytidylate kinase family. Type 1 subfamily.

Its subcellular location is the cytoplasm. The catalysed reaction is CMP + ATP = CDP + ADP. It catalyses the reaction dCMP + ATP = dCDP + ADP. The sequence is that of Cytidylate kinase from Haemophilus ducreyi (strain 35000HP / ATCC 700724).